Here is a 412-residue protein sequence, read N- to C-terminus: Gamma-glutamyl phosphate reductase (412 aa).

Belongs to the gamma-glutamyl phosphate reductase family.

The protein localises to the cytoplasm. It catalyses the reaction L-glutamate 5-semialdehyde + phosphate + NADP(+) = L-glutamyl 5-phosphate + NADPH + H(+). Its pathway is amino-acid biosynthesis; L-proline biosynthesis; L-glutamate 5-semialdehyde from L-glutamate: step 2/2. Functionally, catalyzes the NADPH-dependent reduction of L-glutamate 5-phosphate into L-glutamate 5-semialdehyde and phosphate. The product spontaneously undergoes cyclization to form 1-pyrroline-5-carboxylate. The chain is Gamma-glutamyl phosphate reductase from Bartonella bacilliformis (strain ATCC 35685 / KC583 / Herrer 020/F12,63).